The sequence spans 229 residues: MEGLTDRQLEVLRFIASQIEDHGYPPTIREIGEALDIRSTNGVNDHLKALERKGYLSRDPVKSRALIPTSAAREALGGGGEAGSNVVPLVRGPARPGSRMIEIPIVGRVAAGMPILAQERVEDTVQVDAFLLGTNKKVYGLRVQGDSMIGDGILPGDYVFVKKQLNADDGEIVVAMIDDEATVKRVYFEGDRVRFQPSNPRMAPIYVRHSDFRSTMILGVVVGVYRKLT.

A DNA-binding region (H-T-H motif) is located at residues 28-48 (IREIGEALDIRSTNGVNDHLK). Residues Ser147 and Lys184 each act as for autocatalytic cleavage activity in the active site.

The protein belongs to the peptidase S24 family. Homodimer.

The catalysed reaction is Hydrolysis of Ala-|-Gly bond in repressor LexA.. In terms of biological role, represses a number of genes involved in the response to DNA damage (SOS response), including recA and lexA. In the presence of single-stranded DNA, RecA interacts with LexA causing an autocatalytic cleavage which disrupts the DNA-binding part of LexA, leading to derepression of the SOS regulon and eventually DNA repair. The protein is LexA repressor of Anaeromyxobacter dehalogenans (strain 2CP-C).